We begin with the raw amino-acid sequence, 165 residues long: Nucleotide-binding protein A9601_05361 (165 aa).

This sequence belongs to the YajQ family.

Functionally, nucleotide-binding protein. This Prochlorococcus marinus (strain AS9601) protein is Nucleotide-binding protein A9601_05361.